Consider the following 248-residue polypeptide: Tyrosine recombinase XerD-like (248 aa).

Residues 1 to 72 (MIAFIEPFLA…TVNQFLYYLY (72 aa)) enclose the Core-binding (CB) domain. The Tyr recombinase domain maps to 92 to 248 (SLKPQLTRLD…PITLEKYYKM (157 aa)). R213 is a catalytic residue. Y245 serves as the catalytic O-(3'-phospho-DNA)-tyrosine intermediate.

Belongs to the 'phage' integrase family. XerD-like subfamily.

It is found in the cytoplasm. Its function is as follows. Putative tyrosine recombinase. Not involved in the cutting and rejoining of the recombining DNA molecules on dif(SL) site. This chain is Tyrosine recombinase XerD-like, found in Streptococcus equi subsp. zooepidemicus (strain H70).